A 256-amino-acid polypeptide reads, in one-letter code: Na(+)-translocating NADH-quinone reductase subunit C (256 aa).

A helical transmembrane segment spans residues 12–32; that stretch reads LGVVIGLSLVCSIIVSTAAVG. An FMN phosphoryl threonine modification is found at threonine 224.

It belongs to the NqrC family. As to quaternary structure, composed of six subunits; NqrA, NqrB, NqrC, NqrD, NqrE and NqrF. FMN serves as cofactor.

Its subcellular location is the cell inner membrane. The catalysed reaction is a ubiquinone + n Na(+)(in) + NADH + H(+) = a ubiquinol + n Na(+)(out) + NAD(+). This reaction is tightly coupled to the Na(+) pumping activity and specifically requires Na(+) for activity. Inhibited by korormicin and 2-N-heptyl-4-hydroxyquinoline N-oxide (HQNO). Its function is as follows. NQR complex catalyzes the reduction of ubiquinone-1 to ubiquinol by two successive reactions, coupled with the transport of Na(+) ions from the cytoplasm to the periplasm. NqrA to NqrE are probably involved in the second step, the conversion of ubisemiquinone to ubiquinol. This Vibrio alginolyticus protein is Na(+)-translocating NADH-quinone reductase subunit C.